The following is a 129-amino-acid chain: MAKPAARPRKKVKKTVVDGIAHIHASFNNTIVTITDRQGNALSWATSGGSGFRGSRKSTPFAAQVAAERAGQAALEYGLKNLDVNVKGPGPGRESAVRALNGCGYKIASITDVTPIPHNGCRPPKKRRV.

This sequence belongs to the universal ribosomal protein uS11 family. Part of the 30S ribosomal subunit. Interacts with proteins S7 and S18. Binds to IF-3.

In terms of biological role, located on the platform of the 30S subunit, it bridges several disparate RNA helices of the 16S rRNA. Forms part of the Shine-Dalgarno cleft in the 70S ribosome. This is Small ribosomal subunit protein uS11 from Pseudomonas fluorescens (strain SBW25).